A 104-amino-acid chain; its full sequence is MGGYGVMADEESLDYSVHEAWNEATNVYLLVILVSFALLMYARKNKRKIMRIFTLPPTVGSSSEPNFYDSLQKVRLRQQLEMYSLARKYDQQQSQSESVQLSME.

The helical transmembrane segment at 20–42 (AWNEATNVYLLVILVSFALLMYA) threads the bilayer.

The protein belongs to the SMIM19 family.

It is found in the membrane. The polypeptide is Small integral membrane protein 19 (smim19) (Danio rerio (Zebrafish)).